We begin with the raw amino-acid sequence, 325 residues long: Elongation factor P--(R)-beta-lysine ligase (325 aa).

Substrate is bound at residue 76-78 (SPE). Residues 100–102 (RNE) and Asn109 contribute to the ATP site. Tyr118 contacts substrate. ATP is bound at residue 244–245 (EL). Substrate is bound at residue Glu251. Gly300 is a binding site for ATP.

The protein belongs to the class-II aminoacyl-tRNA synthetase family. EpmA subfamily. As to quaternary structure, homodimer.

The enzyme catalyses D-beta-lysine + L-lysyl-[protein] + ATP = N(6)-((3R)-3,6-diaminohexanoyl)-L-lysyl-[protein] + AMP + diphosphate + H(+). With EpmB is involved in the beta-lysylation step of the post-translational modification of translation elongation factor P (EF-P) on 'Lys-34'. Catalyzes the ATP-dependent activation of (R)-beta-lysine produced by EpmB, forming a lysyl-adenylate, from which the beta-lysyl moiety is then transferred to the epsilon-amino group of EF-P 'Lys-34'. The protein is Elongation factor P--(R)-beta-lysine ligase of Salmonella choleraesuis (strain SC-B67).